The following is a 1171-amino-acid chain: Myosin-B/C (1171 aa).

One can recognise a Myosin motor domain in the interval 105-780 (ETVDDIGYLP…AAKELSILQR (676 aa)). Position 199–206 (199–206 (GESGAGKT)) interacts with ATP. The interval 671–681 (AHFIRCLKPNE) is actin-binding. The tail stretch occupies residues 810–1171 (IHFLTRLESN…CFEACAPDRP (362 aa)).

It belongs to the TRAFAC class myosin-kinesin ATPase superfamily. Myosin family.

It localises to the cytoplasm. Its function is as follows. Myosins are actin-based motor molecules with ATPase activity. Unconventional myosins serve in intracellular movements. Their highly divergent tails are presumed to bind to membranous compartments, which would be moved relative to actin filaments. Plays a role in proper daughter cell budding and separation. The chain is Myosin-B/C from Toxoplasma gondii.